The sequence spans 185 residues: Ribosome-recycling factor (185 aa).

Belongs to the RRF family.

The protein localises to the cytoplasm. Its function is as follows. Responsible for the release of ribosomes from messenger RNA at the termination of protein biosynthesis. May increase the efficiency of translation by recycling ribosomes from one round of translation to another. This chain is Ribosome-recycling factor, found in Halalkalibacterium halodurans (strain ATCC BAA-125 / DSM 18197 / FERM 7344 / JCM 9153 / C-125) (Bacillus halodurans).